A 237-amino-acid chain; its full sequence is Protein GrpE (237 aa).

2 disordered regions span residues 24 to 56 (LILEDSEAEAGTSSGETAAEPSPDPGEALKQLQ) and 204 to 237 (SAGSPSSEPSPPAQATIEAGPENTPASPQNPQPS).

This sequence belongs to the GrpE family. As to quaternary structure, homodimer.

The protein localises to the cytoplasm. Functionally, participates actively in the response to hyperosmotic and heat shock by preventing the aggregation of stress-denatured proteins, in association with DnaK and GrpE. It is the nucleotide exchange factor for DnaK and may function as a thermosensor. Unfolded proteins bind initially to DnaJ; upon interaction with the DnaJ-bound protein, DnaK hydrolyzes its bound ATP, resulting in the formation of a stable complex. GrpE releases ADP from DnaK; ATP binding to DnaK triggers the release of the substrate protein, thus completing the reaction cycle. Several rounds of ATP-dependent interactions between DnaJ, DnaK and GrpE are required for fully efficient folding. In Synechococcus sp. (strain JA-2-3B'a(2-13)) (Cyanobacteria bacterium Yellowstone B-Prime), this protein is Protein GrpE.